The primary structure comprises 1072 residues: DNA-directed RNA polymerase subunit beta (1072 aa).

This sequence belongs to the RNA polymerase beta chain family. In plastids the minimal PEP RNA polymerase catalytic core is composed of four subunits: alpha, beta, beta', and beta''. When a (nuclear-encoded) sigma factor is associated with the core the holoenzyme is formed, which can initiate transcription.

The protein localises to the plastid. It localises to the chloroplast. It carries out the reaction RNA(n) + a ribonucleoside 5'-triphosphate = RNA(n+1) + diphosphate. In terms of biological role, DNA-dependent RNA polymerase catalyzes the transcription of DNA into RNA using the four ribonucleoside triphosphates as substrates. The polypeptide is DNA-directed RNA polymerase subunit beta (Eucalyptus globulus subsp. globulus (Tasmanian blue gum)).